The following is a 245-amino-acid chain: tRNA pseudouridine synthase A (245 aa).

Catalysis depends on D52, which acts as the Nucleophile. Y110 contributes to the substrate binding site.

The protein belongs to the tRNA pseudouridine synthase TruA family. In terms of assembly, homodimer.

It carries out the reaction uridine(38/39/40) in tRNA = pseudouridine(38/39/40) in tRNA. Functionally, formation of pseudouridine at positions 38, 39 and 40 in the anticodon stem and loop of transfer RNAs. This chain is tRNA pseudouridine synthase A, found in Ruminiclostridium cellulolyticum (strain ATCC 35319 / DSM 5812 / JCM 6584 / H10) (Clostridium cellulolyticum).